The sequence spans 66 residues: Metallothionein-like protein type 3 (66 aa).

The protein belongs to the metallothionein superfamily. Type 15 family.

Metallothioneins have a high content of cysteine residues that bind various heavy metals. The sequence is that of Metallothionein-like protein type 3 (MT2) from Malus domestica (Apple).